We begin with the raw amino-acid sequence, 227 residues long: Transcription antitermination protein NusB (227 aa).

Disordered regions lie at residues 165–189 (ASES…SDED) and 201–227 (AEET…ADES). Acidic residues-rich tracts occupy residues 178–189 (DDSDALDDSDED) and 201–214 (AEET…AEDS). Over residues 215-227 (EVSKVSEEKADES) the composition is skewed to basic and acidic residues.

This sequence belongs to the NusB family.

Functionally, involved in transcription antitermination. Required for transcription of ribosomal RNA (rRNA) genes. Binds specifically to the boxA antiterminator sequence of the ribosomal RNA (rrn) operons. The protein is Transcription antitermination protein NusB of Corynebacterium glutamicum (strain ATCC 13032 / DSM 20300 / JCM 1318 / BCRC 11384 / CCUG 27702 / LMG 3730 / NBRC 12168 / NCIMB 10025 / NRRL B-2784 / 534).